Here is a 599-residue protein sequence, read N- to C-terminus: Aspartate--tRNA ligase (599 aa).

Glutamate 180 contributes to the L-aspartate binding site. The interval 204–207 (QIFK) is aspartate. Position 226 (arginine 226) interacts with L-aspartate. ATP contacts are provided by residues 226–228 (RDE) and glutamine 235. Histidine 454 provides a ligand contact to L-aspartate. Glutamate 488 contributes to the ATP binding site. Arginine 495 is an L-aspartate binding site. 540–543 (GLDR) contributes to the ATP binding site.

Belongs to the class-II aminoacyl-tRNA synthetase family. Type 1 subfamily. As to quaternary structure, homodimer.

The protein localises to the cytoplasm. The catalysed reaction is tRNA(Asp) + L-aspartate + ATP = L-aspartyl-tRNA(Asp) + AMP + diphosphate. Its function is as follows. Catalyzes the attachment of L-aspartate to tRNA(Asp) in a two-step reaction: L-aspartate is first activated by ATP to form Asp-AMP and then transferred to the acceptor end of tRNA(Asp). The polypeptide is Aspartate--tRNA ligase (Clostridium botulinum (strain Eklund 17B / Type B)).